Here is a 33-residue protein sequence, read N- to C-terminus: Cytochrome b6-f complex subunit 6 (33 aa).

Residues 4 to 24 (ITIISYFGFLLASIIFTLVLF) traverse the membrane as a helical segment.

It belongs to the PetL family. The 4 large subunits of the cytochrome b6-f complex are cytochrome b6, subunit IV (17 kDa polypeptide, PetD), cytochrome f and the Rieske protein, while the 4 small subunits are PetG, PetL, PetM and PetN. The complex functions as a dimer.

Its subcellular location is the plastid. It is found in the chloroplast thylakoid membrane. Functionally, component of the cytochrome b6-f complex, which mediates electron transfer between photosystem II (PSII) and photosystem I (PSI), cyclic electron flow around PSI, and state transitions. PetL is important for photoautotrophic growth as well as for electron transfer efficiency and stability of the cytochrome b6-f complex. This chain is Cytochrome b6-f complex subunit 6, found in Pinus thunbergii (Japanese black pine).